Reading from the N-terminus, the 344-residue chain is Heat-inducible transcription repressor HrcA (344 aa).

It belongs to the HrcA family.

Its function is as follows. Negative regulator of class I heat shock genes (grpE-dnaK-dnaJ and groELS operons). Prevents heat-shock induction of these operons. The chain is Heat-inducible transcription repressor HrcA from Desulforudis audaxviator (strain MP104C).